The following is a 264-amino-acid chain: Glutamate racemase (264 aa).

Substrate contacts are provided by residues 10–11 (DS) and 42–43 (YG). The active-site Proton donor/acceptor is C73. 74–75 (NT) serves as a coordination point for substrate. C183 acts as the Proton donor/acceptor in catalysis. 184–185 (TH) serves as a coordination point for substrate.

It belongs to the aspartate/glutamate racemases family.

It carries out the reaction L-glutamate = D-glutamate. Its pathway is cell wall biogenesis; peptidoglycan biosynthesis. In terms of biological role, provides the (R)-glutamate required for cell wall biosynthesis. The polypeptide is Glutamate racemase (Streptococcus pyogenes serotype M49 (strain NZ131)).